Reading from the N-terminus, the 455-residue chain is Bifunctional protein GlmU (455 aa).

Residues 1 to 228 (MTQPLHVIIL…AQEAEGANDP (228 aa)) are pyrophosphorylase. UDP-N-acetyl-alpha-D-glucosamine contacts are provided by residues 10 to 13 (LAAG), lysine 24, glutamine 76, 81 to 82 (GT), 103 to 105 (YGD), glycine 138, glutamate 153, asparagine 168, and asparagine 226. Aspartate 105 lines the Mg(2+) pocket. Residue asparagine 226 coordinates Mg(2+). The segment at 229 to 249 (WQLSQLERAWQRRAVRALCAQ) is linker. Positions 250 to 455 (GARVRDPARL…DGWKRPLKKS (206 aa)) are N-acetyltransferase. Positions 332 and 350 each coordinate UDP-N-acetyl-alpha-D-glucosamine. Histidine 362 serves as the catalytic Proton acceptor. 2 residues coordinate UDP-N-acetyl-alpha-D-glucosamine: tyrosine 365 and asparagine 376. Acetyl-CoA is bound by residues alanine 379, 385–386 (NY), serine 404, alanine 422, and arginine 439.

In the N-terminal section; belongs to the N-acetylglucosamine-1-phosphate uridyltransferase family. It in the C-terminal section; belongs to the transferase hexapeptide repeat family. Homotrimer. The cofactor is Mg(2+).

The protein localises to the cytoplasm. It catalyses the reaction alpha-D-glucosamine 1-phosphate + acetyl-CoA = N-acetyl-alpha-D-glucosamine 1-phosphate + CoA + H(+). The catalysed reaction is N-acetyl-alpha-D-glucosamine 1-phosphate + UTP + H(+) = UDP-N-acetyl-alpha-D-glucosamine + diphosphate. It participates in nucleotide-sugar biosynthesis; UDP-N-acetyl-alpha-D-glucosamine biosynthesis; N-acetyl-alpha-D-glucosamine 1-phosphate from alpha-D-glucosamine 6-phosphate (route II): step 2/2. The protein operates within nucleotide-sugar biosynthesis; UDP-N-acetyl-alpha-D-glucosamine biosynthesis; UDP-N-acetyl-alpha-D-glucosamine from N-acetyl-alpha-D-glucosamine 1-phosphate: step 1/1. Its pathway is bacterial outer membrane biogenesis; LPS lipid A biosynthesis. Catalyzes the last two sequential reactions in the de novo biosynthetic pathway for UDP-N-acetylglucosamine (UDP-GlcNAc). The C-terminal domain catalyzes the transfer of acetyl group from acetyl coenzyme A to glucosamine-1-phosphate (GlcN-1-P) to produce N-acetylglucosamine-1-phosphate (GlcNAc-1-P), which is converted into UDP-GlcNAc by the transfer of uridine 5-monophosphate (from uridine 5-triphosphate), a reaction catalyzed by the N-terminal domain. The protein is Bifunctional protein GlmU of Stenotrophomonas maltophilia (strain K279a).